Reading from the N-terminus, the 326-residue chain is Phosphate acyltransferase (326 aa).

It belongs to the PlsX family. Homodimer. Probably interacts with PlsY.

The protein resides in the cytoplasm. It catalyses the reaction a fatty acyl-[ACP] + phosphate = an acyl phosphate + holo-[ACP]. The protein operates within lipid metabolism; phospholipid metabolism. Its function is as follows. Catalyzes the reversible formation of acyl-phosphate (acyl-PO(4)) from acyl-[acyl-carrier-protein] (acyl-ACP). This enzyme utilizes acyl-ACP as fatty acyl donor, but not acyl-CoA. This chain is Phosphate acyltransferase, found in Petrotoga mobilis (strain DSM 10674 / SJ95).